The chain runs to 536 residues: MDRVLLSSQLSSQTVVNTRVQQGSGGINSIGFAVIRKGSLKLRCYAIGGLGGGENLNDPLKESNNGPVLQGFNGSSASFRTVGAKITQETGDFFVSDAEGDPDKPTDGFSSIDEAIGALHEGKFVIAVDDESGDNEGDLVMAATLADPESIAFMIRNGSGIISVGMKEEDLTRLMIPMMSPIAEIEDISAAASTVTVDARVGISTGVSAADRAKTIFTLASPDSKPTDLRRPGHIFPLKYRNGGVLKRAGHTEASVDLVALAGLRPVSVLSTVINPVDGSMAGMPVLKQMALEHDIPIVSIADLIRYRRKREKLVELIAVSRLPTKWGLFRAYCYQSKLDGTEHIAVAKGDIGDGEDVLVRVHSECLTGDILGSARCDCGNQLDLAMQLIDKAGRGVLVYLRGHEGRGIGLGQKLRAYNLQDDGHDTVQANVELGLAVDSREYGIGAQILRDMGVRTMRLMTNNPAKFVGLKGYGLAVVGRVPVISPITKENQRYLETKRTKMGHVYGSDLPGNVPEEFLNPDDIAGDQDEDDTHN.

Residues Met1–Arg43 constitute a chloroplast transit peptide. The tract at residues Cys44 to Lys310 is inactive DHBP synthase. Residues Gly133–Asp134, Asp138, and Arg248–Thr252 each bind D-ribulose 5-phosphate. Positions Arg311–Asn536 are GTP cyclohydrolase II. Arg361–Glu365 provides a ligand contact to GTP. The Zn(2+) site is built by Cys366, Cys377, and Cys379. GTP-binding positions include Gln382, Glu405–Arg407, and Thr427. The Proton acceptor; for GTP cyclohydrolase activity role is filled by Asp439. The Nucleophile; for GTP cyclohydrolase activity role is filled by Arg441. Residues Thr462 and Lys467 each contribute to the GTP site. Residues Tyr507–Asn536 are disordered. Over residues Ile525 to Asn536 the composition is skewed to acidic residues.

It in the N-terminal section; belongs to the DHBP synthase family. In the C-terminal section; belongs to the GTP cyclohydrolase II family. Zn(2+) is required as a cofactor.

The protein resides in the plastid. The protein localises to the chloroplast. It catalyses the reaction GTP + 4 H2O = 2,5-diamino-6-hydroxy-4-(5-phosphoribosylamino)-pyrimidine + formate + 2 phosphate + 3 H(+). Its pathway is cofactor biosynthesis; riboflavin biosynthesis; 5-amino-6-(D-ribitylamino)uracil from GTP: step 1/4. In terms of biological role, involved in riboflavin biosynthesis. Catalyzes the conversion of GTP to 2,5-diamino-6-ribosylamino-4(3H)-pyrimidinone 5'-phosphate (DARP), formate and pyrophosphate. The protein is Probable monofunctional riboflavin biosynthesis protein RIBA 3, chloroplastic (RIBA3) of Oryza sativa subsp. japonica (Rice).